Reading from the N-terminus, the 297-residue chain is tRNA uridine(34) hydroxylase (297 aa).

One can recognise a Rhodanese domain in the interval 133–228; it reads RGEEVVFFDG…YGETFKDQGL (96 aa). Residue C188 is the Cysteine persulfide intermediate of the active site.

The protein belongs to the TrhO family.

The enzyme catalyses uridine(34) in tRNA + AH2 + O2 = 5-hydroxyuridine(34) in tRNA + A + H2O. Functionally, catalyzes oxygen-dependent 5-hydroxyuridine (ho5U) modification at position 34 in tRNAs. This chain is tRNA uridine(34) hydroxylase, found in Arthrobacter sp. (strain FB24).